A 749-amino-acid polypeptide reads, in one-letter code: NAD(P)H-quinone oxidoreductase subunit 5, chloroplastic (749 aa).

16 helical membrane-spanning segments follow: residues 9 to 29 (WIIPFLPLPIPMLLGVGLLLF), 40 to 60 (WSFTSVLLLSIVMTFSVNLSI), 89 to 109 (IDPLTSIMSILITTVGIMVLI), 125 to 145 (FAYMSFFNASMLGLVTSSNLI), 147 to 167 (IYIFWELVGMCSYLLIGFWFT), 185 to 205 (GDFGLLLGILGLYWITGSFEF), 221 to 241 (NGTNFLFVSLCALFLFVGAVA), 260 to 280 (TPISALIHAATMVAAGIFLVA), 285 to 305 (LFIVIPYIMNLISLIGIITIL), 329 to 349 (LGYTMLALGMGSYRAALFHLI), 356 to 376 (ALLFLGSGSIIHSMEAIVGYS), 398 to 418 (NTFLLGTLSLCGIPPLACFWS), 427 to 447 (WLYSPIFAIIACLTAGLTAFY), 553 to 573 (LFPLFALALFTLFVGAIGIPF), 607 to 627 (FVINAIFSVSISYFGIFLASL), and 727 to 747 (SYLFLYLSSVSILLLISYFFL).

Belongs to the complex I subunit 5 family. NDH is composed of at least 16 different subunits, 5 of which are encoded in the nucleus.

It is found in the plastid. The protein localises to the chloroplast thylakoid membrane. It carries out the reaction a plastoquinone + NADH + (n+1) H(+)(in) = a plastoquinol + NAD(+) + n H(+)(out). The catalysed reaction is a plastoquinone + NADPH + (n+1) H(+)(in) = a plastoquinol + NADP(+) + n H(+)(out). In terms of biological role, NDH shuttles electrons from NAD(P)H:plastoquinone, via FMN and iron-sulfur (Fe-S) centers, to quinones in the photosynthetic chain and possibly in a chloroplast respiratory chain. The immediate electron acceptor for the enzyme in this species is believed to be plastoquinone. Couples the redox reaction to proton translocation, and thus conserves the redox energy in a proton gradient. This Vitis vinifera (Grape) protein is NAD(P)H-quinone oxidoreductase subunit 5, chloroplastic (ndhF).